We begin with the raw amino-acid sequence, 130 residues long: Small ribosomal subunit protein uS9 (130 aa).

This sequence belongs to the universal ribosomal protein uS9 family.

The sequence is that of Small ribosomal subunit protein uS9 from Streptococcus equi subsp. zooepidemicus (strain H70).